A 104-amino-acid chain; its full sequence is Putative thioredoxin-4 (104 aa).

In terms of domain architecture, Thioredoxin spans 2–104; the sequence is SKVTNVSINT…QLRKILDSMK (103 aa). Residues Cys-31 and Cys-34 each act as nucleophile in the active site. A disulfide bridge connects residues Cys-31 and Cys-34.

Belongs to the thioredoxin family.

In terms of biological role, participates in various redox reactions through the reversible oxidation of its active center dithiol to a disulfide and catalyzes dithiol-disulfide exchange reactions. The sequence is that of Putative thioredoxin-4 (trxD) from Dictyostelium discoideum (Social amoeba).